The sequence spans 278 residues: Tryptophan synthase alpha chain (278 aa).

Catalysis depends on proton acceptor residues E61 and D72.

Belongs to the TrpA family. As to quaternary structure, tetramer of two alpha and two beta chains.

The catalysed reaction is (1S,2R)-1-C-(indol-3-yl)glycerol 3-phosphate + L-serine = D-glyceraldehyde 3-phosphate + L-tryptophan + H2O. The protein operates within amino-acid biosynthesis; L-tryptophan biosynthesis; L-tryptophan from chorismate: step 5/5. Functionally, the alpha subunit is responsible for the aldol cleavage of indoleglycerol phosphate to indole and glyceraldehyde 3-phosphate. The sequence is that of Tryptophan synthase alpha chain from Shewanella oneidensis (strain ATCC 700550 / JCM 31522 / CIP 106686 / LMG 19005 / NCIMB 14063 / MR-1).